Here is a 101-residue protein sequence, read N- to C-terminus: Parathymosin (101 aa).

The interval methionine 1–alanine 101 is disordered. Residue serine 2 is modified to N-acetylserine. At serine 2 the chain carries Phosphoserine. Lysine 4 bears the N6-acetyllysine mark. 2 positions are modified to phosphoserine: serine 5 and serine 13. The segment covering serine 13 to valine 37 has biased composition (basic and acidic residues). At lysine 15 the chain carries N6-acetyllysine. Acidic residues predominate over residues valine 38–glutamate 74. Phosphothreonine is present on threonine 52. N6-acetyllysine is present on lysine 91.

The protein belongs to the pro/parathymosin family.

Its function is as follows. Parathymosin may mediate immune function by blocking the effect of prothymosin alpha which confers resistance to certain opportunistic infections. The protein is Parathymosin (Ptms) of Mus musculus (Mouse).